We begin with the raw amino-acid sequence, 350 residues long: tRNA uridine(34) hydroxylase (350 aa).

The region spanning 146–240 (DDPDAVFIDM…YARRAREQGL (95 aa)) is the Rhodanese domain. Cys-200 functions as the Cysteine persulfide intermediate in the catalytic mechanism. A compositionally biased stretch (basic and acidic residues) spans 319–328 (RRRRAGRENG). The segment at 319 to 350 (RRRRAGRENGNKIFNKSRGRLNSKLSIPDPAE) is disordered.

This sequence belongs to the TrhO family.

The catalysed reaction is uridine(34) in tRNA + AH2 + O2 = 5-hydroxyuridine(34) in tRNA + A + H2O. Functionally, catalyzes oxygen-dependent 5-hydroxyuridine (ho5U) modification at position 34 in tRNAs. In Salmonella choleraesuis (strain SC-B67), this protein is tRNA uridine(34) hydroxylase.